The sequence spans 379 residues: Chaperone protein DnaJ (379 aa).

The 66-residue stretch at 5–70 (DYYEVLGVGK…EKKAAYDQYG (66 aa)) folds into the J domain. The CR-type zinc finger occupies 139 to 217 (GHEAQIRVPH…CHGQGKLKSQ (79 aa)). 8 residues coordinate Zn(2+): Cys-152, Cys-155, Cys-169, Cys-172, Cys-191, Cys-194, Cys-205, and Cys-208. CXXCXGXG motif repeat units lie at residues 152 to 159 (CDHCHGNG), 169 to 176 (CPTCHGAG), 191 to 198 (CPKCHGSG), and 205 to 212 (CTKCHGQG). A disordered region spans residues 356–379 (VHEGGSRHSPQEQSWLDKVKSFFS).

It belongs to the DnaJ family. In terms of assembly, homodimer. It depends on Zn(2+) as a cofactor.

It is found in the cytoplasm. Its function is as follows. Participates actively in the response to hyperosmotic and heat shock by preventing the aggregation of stress-denatured proteins and by disaggregating proteins, also in an autonomous, DnaK-independent fashion. Unfolded proteins bind initially to DnaJ; upon interaction with the DnaJ-bound protein, DnaK hydrolyzes its bound ATP, resulting in the formation of a stable complex. GrpE releases ADP from DnaK; ATP binding to DnaK triggers the release of the substrate protein, thus completing the reaction cycle. Several rounds of ATP-dependent interactions between DnaJ, DnaK and GrpE are required for fully efficient folding. Also involved, together with DnaK and GrpE, in the DNA replication of plasmids through activation of initiation proteins. This is Chaperone protein DnaJ from Cupriavidus pinatubonensis (strain JMP 134 / LMG 1197) (Cupriavidus necator (strain JMP 134)).